The sequence spans 496 residues: Genome polyprotein (496 aa).

Residues 1 to 447 are Extracellular-facing; that stretch reads SRCTHLENRD…HTVLGGAFNS (447 aa). Cystine bridges form between Cys-3/Cys-30, Cys-60/Cys-116, Cys-60/Cys-121, Cys-74/Cys-105, Cys-92/Cys-116, and Cys-92/Cys-121. The tract at residues 98 to 111 is fusion peptide; the sequence is DRGWGNHCGLFGKG. The N-linked (GlcNAc...) asparagine; by host glycan is linked to Asn-154. 2 disulfide bridges follow: Cys-186–Cys-290 and Cys-307–Cys-338. Residues 448-468 form a helical membrane-spanning segment; sequence IFGGVGFLPKLLMGVALAWLG. Residues 469–479 lie on the Cytoplasmic side of the membrane; the sequence is LNTRNPTMSIS. The chain crosses the membrane as a helical span at residues 480–496; sequence FLLTGGLVLAMTLGVGA.

Homodimer; in the endoplasmic reticulum and Golgi. In terms of processing, N-glycosylated.

It localises to the virion membrane. It is found in the host endoplasmic reticulum membrane. Functionally, binds to host cell surface receptor and mediates fusion between viral and cellular membranes. Envelope protein is synthesized in the endoplasmic reticulum in the form of heterodimer with protein prM. They play a role in virion budding in the ER, and the newly formed immature particle is covered with 60 spikes composed of heterodimer between precursor prM and envelope protein E. The virion is transported to the Golgi apparatus where the low pH causes dissociation of PrM-E heterodimers and formation of E homodimers. prM-E cleavage is ineficient, and many virions are only partially matured. These uncleaved prM would play a role in immune evasion. In Louping ill virus (strain SB 526) (Li), this protein is Genome polyprotein.